We begin with the raw amino-acid sequence, 462 residues long: A-type ATP synthase subunit B (462 aa).

The protein belongs to the ATPase alpha/beta chains family. As to quaternary structure, has multiple subunits with at least A(3), B(3), C, D, E, F, H, I and proteolipid K(x).

It localises to the cell membrane. Its function is as follows. Component of the A-type ATP synthase that produces ATP from ADP in the presence of a proton gradient across the membrane. The B chain is a regulatory subunit. This chain is A-type ATP synthase subunit B, found in Pyrococcus abyssi (strain GE5 / Orsay).